The primary structure comprises 462 residues: Putative endoglucanase type B (462 aa).

The first 16 residues, 1–16 (MAYKLILAAFAATALA), serve as a signal peptide directing secretion. The CBM1 domain occupies 25–61 (CSNGVWAQCGGQNWSGTPCCTSGNKCVKLNDFYSQCQ). 2 cysteine pairs are disulfide-bonded: C33–C50 and C44–C60. N37 is a glycosylation site (N-linked (GlcNAc...) asparagine). Residues 64–100 (SAEPSSTAAGPSSTTATKTTATGGSSTTAGGSVTSAP) show a composition bias toward low complexity. The segment at 64-102 (SAEPSSTAAGPSSTTATKTTATGGSSTTAGGSVTSAPPA) is disordered. A linker region spans residues 66–99 (EPSSTAAGPSSTTATKTTATGGSSTTAGGSVTSA). The interval 100 to 462 (PPAASDNPYA…LLDNANPSFL (363 aa)) is catalytic. The active site involves D190. A disulfide bond links C191 and C250. A glycan (N-linked (GlcNAc...) asparagine) is linked at N223. D236 serves as the catalytic Proton donor. N272 and N317 each carry an N-linked (GlcNAc...) asparagine glycan. Cysteines 383 and 430 form a disulfide. Catalysis depends on D416, which acts as the Nucleophile.

The protein belongs to the glycosyl hydrolase 6 (cellulase B) family.

It carries out the reaction Endohydrolysis of (1-&gt;4)-beta-D-glucosidic linkages in cellulose, lichenin and cereal beta-D-glucans.. In Fusarium oxysporum (Fusarium vascular wilt), this protein is Putative endoglucanase type B.